A 1405-amino-acid chain; its full sequence is DNA-directed RNA polymerase subunit beta' (1405 aa).

Positions 70, 72, 85, and 88 each coordinate Zn(2+). Asp-460, Asp-462, and Asp-464 together coordinate Mg(2+). Residues Cys-814, Cys-888, Cys-895, and Cys-898 each contribute to the Zn(2+) site.

The protein belongs to the RNA polymerase beta' chain family. In terms of assembly, the RNAP catalytic core consists of 2 alpha, 1 beta, 1 beta' and 1 omega subunit. When a sigma factor is associated with the core the holoenzyme is formed, which can initiate transcription. Mg(2+) serves as cofactor. It depends on Zn(2+) as a cofactor.

The catalysed reaction is RNA(n) + a ribonucleoside 5'-triphosphate = RNA(n+1) + diphosphate. Functionally, DNA-dependent RNA polymerase catalyzes the transcription of DNA into RNA using the four ribonucleoside triphosphates as substrates. This is DNA-directed RNA polymerase subunit beta' from Shewanella putrefaciens (strain CN-32 / ATCC BAA-453).